Here is a 93-residue protein sequence, read N- to C-terminus: Cell division topological specificity factor (93 aa).

This sequence belongs to the MinE family.

Prevents the cell division inhibition by proteins MinC and MinD at internal division sites while permitting inhibition at polar sites. This ensures cell division at the proper site by restricting the formation of a division septum at the midpoint of the long axis of the cell. The polypeptide is Cell division topological specificity factor (Methylococcus capsulatus (strain ATCC 33009 / NCIMB 11132 / Bath)).